A 166-amino-acid chain; its full sequence is Early E3 18.5 kDa glycoprotein (166 aa).

An N-terminal signal peptide occupies residues 1–19 (MGPILVLLVLLSLLEAGSA). The Lumenal segment spans residues 20-131 (NYDPCLDFDP…SKDNIVTFSI (112 aa)). Asn-31 is a glycosylation site (N-linked (GlcNAc...) asparagine; by host). 2 disulfides stabilise this stretch: Cys-32-Cys-50 and Cys-44-Cys-106. Asn-63, Asn-67, and Asn-97 each carry an N-linked (GlcNAc...) asparagine; by host glycan. A helical membrane pass occupies residues 132–152 (AYCLCACLLTALLCVCIHLLV). Residues 153-166 (TTRIKNANNKEKMP) are Cytoplasmic-facing. Residues 162–166 (KEKMP) carry the Di-lysine motif motif.

Belongs to the adenoviridae E19 family. In terms of processing, both disulfide bonds are absolutely critical for the interaction with MHC antigens. Post-translationally, N-glycosylated; high-mannose.

The protein resides in the host endoplasmic reticulum membrane. Binds and retains class I heavy chains in the endoplasmic reticulum during the early period of virus infection, thereby impairing their transport to the cell surface. Also delays the expression of class I alleles that it cannot affect by direct retention. Binds transporters associated with antigen processing (TAP) and acts as a tapasin inhibitor, preventing class I/TAP association. In consequence, infected cells are masked for immune recognition by cytotoxic T-lymphocytes. The sequence is that of Early E3 18.5 kDa glycoprotein from Human adenovirus B serotype 11 (strain BC34) (HAdV-11).